A 286-amino-acid chain; its full sequence is Probable endonuclease 4 (286 aa).

9 residues coordinate Zn(2+): His-67, His-107, Glu-146, Asp-180, His-183, His-217, Asp-230, His-232, and Glu-262.

This sequence belongs to the AP endonuclease 2 family. It depends on Zn(2+) as a cofactor.

It catalyses the reaction Endonucleolytic cleavage to 5'-phosphooligonucleotide end-products.. Its function is as follows. Endonuclease IV plays a role in DNA repair. It cleaves phosphodiester bonds at apurinic or apyrimidinic (AP) sites, generating a 3'-hydroxyl group and a 5'-terminal sugar phosphate. This is Probable endonuclease 4 from Methanosphaerula palustris (strain ATCC BAA-1556 / DSM 19958 / E1-9c).